An 894-amino-acid chain; its full sequence is Probable cytoplasmic aconitate hydratase (894 aa).

Substrate-binding positions include Gln87 and 207-209 (DSH). [4Fe-4S] cluster is bound by residues Cys438, Cys504, and Cys507. Substrate-binding positions include Arg537, Arg542, and 781-782 (SR).

This sequence belongs to the aconitase/IPM isomerase family. Requires [4Fe-4S] cluster as cofactor.

It is found in the cytoplasm. The protein localises to the cytosol. The catalysed reaction is citrate = D-threo-isocitrate. Functionally, catalyzes the isomerization of citrate to isocitrate via cis-aconitate. The polypeptide is Probable cytoplasmic aconitate hydratase (aco1) (Dictyostelium discoideum (Social amoeba)).